Consider the following 274-residue polypeptide: tRNA-cytidine(32) 2-sulfurtransferase (274 aa).

The PP-loop motif signature appears at 40–45; that stretch reads SGGKDS. Residues C115, C118, and C206 each contribute to the [4Fe-4S] cluster site.

It belongs to the TtcA family. Homodimer. It depends on Mg(2+) as a cofactor. [4Fe-4S] cluster serves as cofactor.

The protein localises to the cytoplasm. It carries out the reaction cytidine(32) in tRNA + S-sulfanyl-L-cysteinyl-[cysteine desulfurase] + AH2 + ATP = 2-thiocytidine(32) in tRNA + L-cysteinyl-[cysteine desulfurase] + A + AMP + diphosphate + H(+). The protein operates within tRNA modification. In terms of biological role, catalyzes the ATP-dependent 2-thiolation of cytidine in position 32 of tRNA, to form 2-thiocytidine (s(2)C32). The sulfur atoms are provided by the cysteine/cysteine desulfurase (IscS) system. The protein is tRNA-cytidine(32) 2-sulfurtransferase of Pseudomonas paraeruginosa (strain DSM 24068 / PA7) (Pseudomonas aeruginosa (strain PA7)).